The primary structure comprises 349 residues: Methylglutaconyl-CoA hydratase 1, mitochondrial (349 aa).

The N-terminal 37 residues, 1–37, are a transit peptide targeting the mitochondrion; that stretch reads MPPVSRILSYAPRVAIRPSSQLARPARAFAVGTVRYY.

It belongs to the enoyl-CoA hydratase/isomerase family. Homohexamer.

It is found in the mitochondrion. It catalyses the reaction (3S)-3-hydroxy-3-methylglutaryl-CoA = 3-methyl-(2E)-glutaconyl-CoA + H2O. Its pathway is amino-acid degradation; L-leucine degradation; (S)-3-hydroxy-3-methylglutaryl-CoA from 3-isovaleryl-CoA: step 3/3. 3-methylglutaconyl-CoA hydratase that catalyzes the fifth step in the leucine degradation pathway, the reversible hydration of 3-methylglutaconyl-CoA (3-MG-CoA) to 3-hydroxy-3-methylglutaryl-CoA (HMG-CoA). Involved in vegetative growth, conidiation and in the stress response. Controls mitochondrial morphology and mitophagy, which are critical for the infectious growth of the pathogen. In Pyricularia oryzae (strain 70-15 / ATCC MYA-4617 / FGSC 8958) (Rice blast fungus), this protein is Methylglutaconyl-CoA hydratase 1, mitochondrial.